A 516-amino-acid polypeptide reads, in one-letter code: 4-hydroxybenzoate brominase (decarboxylating) (516 aa).

Residues Ser-13, Glu-32, Val-40, Phe-41, His-51, Val-102, and Gln-365 each coordinate FAD.

This sequence belongs to the FMO family. FAD is required as a cofactor.

It carries out the reaction 2 bromide + 4-hydroxybenzoate + 2 NADPH + 2 O2 + 5 H(+) = 2,4-dibromophenol + CO2 + 2 NADP(+) + 4 H2O. The catalysed reaction is bromide + 4-hydroxybenzoate + NADPH + O2 + 2 H(+) = 3-bromo-4-hydroxybenzoate + NADP(+) + 2 H2O. The enzyme catalyses 3-bromo-4-hydroxybenzoate + bromide + NADPH + O2 + 3 H(+) = 2,4-dibromophenol + CO2 + NADP(+) + 2 H2O. It catalyses the reaction 3,4-dihydroxybenzoate + 2 bromide + 2 NADPH + 2 O2 + 5 H(+) = 3,5-dibromobenzene-1,2-diol + CO2 + 2 NADP(+) + 4 H2O. It carries out the reaction 3,4-dihydroxybenzoate + bromide + NADPH + O2 + 2 H(+) = 3-bromo-4,5-dihydroxybenzoate + NADP(+) + 2 H2O. The catalysed reaction is 3-bromo-4,5-dihydroxybenzoate + bromide + NADPH + O2 + 3 H(+) = 3,5-dibromobenzene-1,2-diol + CO2 + NADP(+) + 2 H2O. Functionally, brominase involved in the biosynthesis of polybrominated aromatic organic compounds. Catalyzes the bromination of 4-hydroxybenzoate (4-HBA) to 3-bromo-4-hydroxybenzoate, followed by bromination and decarboxylation of 3-bromo-4-hydroxybenzoate to 2,4-dibromophenol. Can also use 3,4-dihydroxybenzoate, with lower efficiency, forming 3-bromo-4,5-dihydroxybenzoate and 3,5-dibromobenzene-1,2-diol. This Marinomonas mediterranea (strain ATCC 700492 / JCM 21426 / NBRC 103028 / MMB-1) protein is 4-hydroxybenzoate brominase (decarboxylating).